Consider the following 491-residue polypeptide: Glycylpeptide N-tetradecanoyltransferase (491 aa).

Residue 45-48 (HKFW) coordinates tetradecanoyl-CoA. A disordered region spans residues 53–79 (VPQITGSGASAPMEEGPIDDPKTPADV). Tetradecanoyl-CoA is bound by residues 182-184 (LCV) and 190-194 (SKRLA). Leu-491 acts as the Proton acceptor; via carboxylate in catalysis.

It belongs to the NMT family. Monomer.

The protein resides in the cytoplasm. It carries out the reaction N-terminal glycyl-[protein] + tetradecanoyl-CoA = N-tetradecanoylglycyl-[protein] + CoA + H(+). In terms of biological role, adds a myristoyl group to the N-terminal glycine residue of certain cellular proteins. This chain is Glycylpeptide N-tetradecanoyltransferase, found in Cryptococcus neoformans (Filobasidiella neoformans).